The sequence spans 205 residues: uncharacterized protein (205 aa).

Residues 5–27 (IIVLFIIHFIMINENVFIALLHY) form a helical membrane-spanning segment.

This sequence to T.maritima TM1570.

It localises to the membrane. This is an uncharacterized protein from Aquifex aeolicus (strain VF5).